A 412-amino-acid polypeptide reads, in one-letter code: Glutamate-1-semialdehyde 2,1-aminomutase (412 aa).

N6-(pyridoxal phosphate)lysine is present on Lys260.

Belongs to the class-III pyridoxal-phosphate-dependent aminotransferase family. HemL subfamily. Pyridoxal 5'-phosphate serves as cofactor.

It localises to the cytoplasm. It carries out the reaction (S)-4-amino-5-oxopentanoate = 5-aminolevulinate. The protein operates within porphyrin-containing compound metabolism; protoporphyrin-IX biosynthesis; 5-aminolevulinate from L-glutamyl-tRNA(Glu): step 2/2. This Methanocorpusculum labreanum (strain ATCC 43576 / DSM 4855 / Z) protein is Glutamate-1-semialdehyde 2,1-aminomutase.